The sequence spans 288 residues: MEQYLSLLKEILEKGQKKEDRTNTGTISYFGTQRRYDLSKGFPLVTTKKVHLKSIIFELLWFIKGDTNIKYLVDNGVNIWNEWPYETFKKSKDFNGESLADFVLKIKSDTLFAKKYGELGPVYGKQWRNFNGTDQLFDAIETIKKNPDSRRIIVSAWAANEISKMALPPCHAFFQFYVNNNKLSLQLYQRSGDTFLGVPFNIASYSILLAMVAQITNYEVGEFIHTIGDTHIYLNHLEQVEEQLSRKPLKLPKLVLNKKIKNIDDFKYEDIEIIDYESHPAIKAKVAV.

Position 21 (Arg-21) interacts with dUMP. Residue His-51 participates in (6R)-5,10-methylene-5,6,7,8-tetrahydrofolate binding. 150–151 (RR) contributes to the dUMP binding site. Residue Cys-170 is the Nucleophile of the active site. DUMP is bound by residues 190–193 (RSGD), Asn-201, and 231–233 (HIY). Asp-193 is a binding site for (6R)-5,10-methylene-5,6,7,8-tetrahydrofolate. (6R)-5,10-methylene-5,6,7,8-tetrahydrofolate is bound at residue Ala-287.

It belongs to the thymidylate synthase family. Bacterial-type ThyA subfamily. As to quaternary structure, homodimer.

The protein resides in the cytoplasm. It carries out the reaction dUMP + (6R)-5,10-methylene-5,6,7,8-tetrahydrofolate = 7,8-dihydrofolate + dTMP. Its pathway is pyrimidine metabolism; dTTP biosynthesis. Its function is as follows. Catalyzes the reductive methylation of 2'-deoxyuridine-5'-monophosphate (dUMP) to 2'-deoxythymidine-5'-monophosphate (dTMP) while utilizing 5,10-methylenetetrahydrofolate (mTHF) as the methyl donor and reductant in the reaction, yielding dihydrofolate (DHF) as a by-product. This enzymatic reaction provides an intracellular de novo source of dTMP, an essential precursor for DNA biosynthesis. This chain is Thymidylate synthase, found in Mycoplasma mobile (strain ATCC 43663 / 163K / NCTC 11711) (Mesomycoplasma mobile).